We begin with the raw amino-acid sequence, 913 residues long: E3 ubiquitin-protein ligase ZNRF3 (913 aa).

The tract at residues 1–32 is disordered; it reads MRPRSGGRPGAPGRRRRRLRRGPRGRRLPPPP. Positions 1–52 are cleaved as a signal peptide; it reads MRPRSGGRPGAPGRRRRRLRRGPRGRRLPPPPPLPLLLGLLLAAAGPGAARA. The span at 13–27 shows a compositional bias: basic residues; it reads GRRRRRLRRGPRGRR. Residues 53-216 lie on the Extracellular side of the membrane; it reads KETAFVEVVL…PRQPTEYFDM (164 aa). Residues 217–237 traverse the membrane as a helical segment; the sequence is GIFLAFFVVVSLVCLILLVKI. The Cytoplasmic portion of the chain corresponds to 238–913; it reads KLKQRRSQNS…GSGPGIGTGA (676 aa). The segment at 290–331 adopts an RING-type; atypical zinc-finger fold; it reads CAICLEKYIDGEELRVIPCTHRFHRKCVDPWLLQHHTCPHCR. 2 disordered regions span residues 601 to 669 and 855 to 913; these read AVHL…GLEV and REEE…GTGA. Polar residues-rich tracts occupy residues 634–664 and 881–890; these read SGDQ…STSE and ASLSSAPQDT. Residues 903 to 913 show a composition bias toward gly residues; the sequence is PGSGPGIGTGA.

It belongs to the ZNRF3 family. In terms of assembly, interacts with LRP6, FZD4, FZD5, FZD6 and FZD8. Interacts with RSPO1; interaction promotes indirect interaction with LGR4 and membrane clearance of ZNRF3. Interacts with LMBR1L.

The protein localises to the cell membrane. It carries out the reaction S-ubiquitinyl-[E2 ubiquitin-conjugating enzyme]-L-cysteine + [acceptor protein]-L-lysine = [E2 ubiquitin-conjugating enzyme]-L-cysteine + N(6)-ubiquitinyl-[acceptor protein]-L-lysine.. It functions in the pathway protein modification; protein ubiquitination. Its activity is regulated as follows. Negatively regulated by R-spondin proteins such as RSPO1: interaction with RSPO1 induces the indirect association between ZNRF3 and LGR4, promoting membrane clearance of ZNRF3. Its function is as follows. E3 ubiquitin-protein ligase that acts as a negative regulator of the Wnt signaling pathway by mediating the ubiquitination and subsequent degradation of Wnt receptor complex components Frizzled and LRP6. Acts on both canonical and non-canonical Wnt signaling pathway. Acts as a tumor suppressor in the intestinal stem cell zone by inhibiting the Wnt signaling pathway, thereby restricting the size of the intestinal stem cell zone. Along with RSPO2 and RNF43, constitutes a master switch that governs limb specification. This Mus musculus (Mouse) protein is E3 ubiquitin-protein ligase ZNRF3 (Znrf3).